The sequence spans 148 residues: 3-dehydroquinate dehydratase (148 aa).

Tyr23 serves as the catalytic Proton acceptor. Asn75, His81, and Asp88 together coordinate substrate. His101 serves as the catalytic Proton donor. Substrate contacts are provided by residues 102 to 103 and Arg112; that span reads IS.

The protein belongs to the type-II 3-dehydroquinase family. In terms of assembly, homododecamer.

It carries out the reaction 3-dehydroquinate = 3-dehydroshikimate + H2O. The protein operates within metabolic intermediate biosynthesis; chorismate biosynthesis; chorismate from D-erythrose 4-phosphate and phosphoenolpyruvate: step 3/7. Its function is as follows. Catalyzes a trans-dehydration via an enolate intermediate. This chain is 3-dehydroquinate dehydratase, found in Methylococcus capsulatus (strain ATCC 33009 / NCIMB 11132 / Bath).